The sequence spans 377 residues: F-box protein At1g11810 (377 aa).

One can recognise an F-box domain in the interval 2–48 (TTTMSTLPVVLVDEILARVPITSLRSLRSTCKKWEASSKTNLVGGKA).

This Arabidopsis thaliana (Mouse-ear cress) protein is F-box protein At1g11810.